A 231-amino-acid polypeptide reads, in one-letter code: Small ribosomal subunit protein uS3 (231 aa).

In terms of domain architecture, KH type-2 spans 17-86 (VEKYLTKELK…SPQIEVQQVQ (70 aa)).

Belongs to the universal ribosomal protein uS3 family. In terms of assembly, part of the 30S ribosomal subunit.

Functionally, binds the lower part of the 30S subunit head. This is Small ribosomal subunit protein uS3 from Methanoregula boonei (strain DSM 21154 / JCM 14090 / 6A8).